The primary structure comprises 537 residues: Oviduct-specific glycoprotein (537 aa).

The first 18 residues, 1–18, serve as a signal peptide directing secretion; that stretch reads LLLCVGLLLVLKHHDGAA. In terms of domain architecture, GH18 spans 19–382; sequence HKLVCYFTNW…HTLNNLLVND (364 aa). Cys23 and Cys48 are joined by a disulfide. Residues 68–69, 95–98, Tyr139, 208–211, and Trp352 contribute to the chitin site; these read PQ, GGWN, and LSYD. N-linked (GlcNAc...) asparagine glycosylation occurs at Asn399. Disordered regions lie at residues 446-475 and 498-537; these read EIAT…GEKP and TGQK…ERRL. A compositionally biased stretch (basic and acidic residues) spans 528–537; that stretch reads GRAETLERRL.

Belongs to the glycosyl hydrolase 18 family. In terms of tissue distribution, oviduct.

The protein resides in the cytoplasmic vesicle. Its subcellular location is the secretory vesicle. In terms of biological role, binds to oocyte zona pellucida in vivo. May play a role in the fertilization process and/or early embryonic development. The sequence is that of Oviduct-specific glycoprotein (OVGP1) from Bos taurus (Bovine).